The chain runs to 372 residues: Cytoplasmic tRNA 2-thiolation protein 1 (372 aa).

A disordered region spans residues 335-372; it reads GKKEDGGCGSGGGGCGCAGAADETENEETRKRLKDLQF. The segment covering 341–351 has biased composition (gly residues); the sequence is GCGSGGGGCGC. A compositionally biased stretch (basic and acidic residues) spans 361 to 372; that stretch reads EETRKRLKDLQF.

Belongs to the TtcA family. CTU1/NCS6/ATPBD3 subfamily.

It localises to the cytoplasm. Its pathway is tRNA modification; 5-methoxycarbonylmethyl-2-thiouridine-tRNA biosynthesis. Plays a central role in 2-thiolation of mcm(5)S(2)U at tRNA wobble positions of tRNA(Lys), tRNA(Glu) and tRNA(Gln). Directly binds tRNAs and probably acts by catalyzing adenylation of tRNAs, an intermediate required for 2-thiolation. It is unclear whether it acts as a sulfurtransferase that transfers sulfur from thiocarboxylated URM1 onto the uridine of tRNAs at wobble position. The sequence is that of Cytoplasmic tRNA 2-thiolation protein 1 from Caenorhabditis briggsae.